A 132-amino-acid chain; its full sequence is DNA-directed RNA polymerase subunit omega (132 aa).

This sequence belongs to the RNA polymerase subunit omega family. As to quaternary structure, the RNAP catalytic core consists of 2 alpha, 1 beta, 1 beta' and 1 omega subunit. When a sigma factor is associated with the core the holoenzyme is formed, which can initiate transcription.

The enzyme catalyses RNA(n) + a ribonucleoside 5'-triphosphate = RNA(n+1) + diphosphate. In terms of biological role, promotes RNA polymerase assembly. Latches the N- and C-terminal regions of the beta' subunit thereby facilitating its interaction with the beta and alpha subunits. In Ehrlichia ruminantium (strain Welgevonden), this protein is DNA-directed RNA polymerase subunit omega.